A 200-amino-acid polypeptide reads, in one-letter code: Holliday junction branch migration complex subunit RuvA (200 aa).

The interval 1 to 64 is domain I; the sequence is MFAYFRGKLT…EDLLQLYGFS (64 aa). The interval 65 to 143 is domain II; that stretch reads GEEERQLFRL…KLSPVSALAS (79 aa). The segment at 144–154 is flexible linker; the sequence is PARLSSTLLRD. The interval 154-200 is domain III; it reads DDAVNALVTLGFSRIIVQKAVVAILEQNPGLTVEEVIKAALVSIHNS.

Belongs to the RuvA family. As to quaternary structure, homotetramer. Forms an RuvA(8)-RuvB(12)-Holliday junction (HJ) complex. HJ DNA is sandwiched between 2 RuvA tetramers; dsDNA enters through RuvA and exits via RuvB. An RuvB hexamer assembles on each DNA strand where it exits the tetramer. Each RuvB hexamer is contacted by two RuvA subunits (via domain III) on 2 adjacent RuvB subunits; this complex drives branch migration. In the full resolvosome a probable DNA-RuvA(4)-RuvB(12)-RuvC(2) complex forms which resolves the HJ.

The protein resides in the cytoplasm. Its function is as follows. The RuvA-RuvB-RuvC complex processes Holliday junction (HJ) DNA during genetic recombination and DNA repair, while the RuvA-RuvB complex plays an important role in the rescue of blocked DNA replication forks via replication fork reversal (RFR). RuvA specifically binds to HJ cruciform DNA, conferring on it an open structure. The RuvB hexamer acts as an ATP-dependent pump, pulling dsDNA into and through the RuvAB complex. HJ branch migration allows RuvC to scan DNA until it finds its consensus sequence, where it cleaves and resolves the cruciform DNA. This is Holliday junction branch migration complex subunit RuvA from Pelodictyon phaeoclathratiforme (strain DSM 5477 / BU-1).